We begin with the raw amino-acid sequence, 470 residues long: MNPNQKIITIGSVSLGLVILSIILHVVSIIVTVLVLSNTGTGLNCNGTIIKEYNETVRVERITQWYNTNIIEYIGRPSNEYYMNNTESLCEAQGFAPFSKDNGIRIGSRGHVFVIREPFVSCSPLECRTFFLTQGSLLNDKHSNGTVKDRSPYRTLMSVEVGQSPNVYQARFEAVAWSATACHDGKKWMTVGVTGPDAQAVAVVHYGGVPVDVINSWAGDILRTQESSCTCIKGDCYWVMTDGPANRQAQYRIFKAKDGRIIGQNDINFNGGHIEECSCYPNEGKVECVCRDNWTGTNRPILVISPNLSYTVGYLCAGIPTDTPRGEDSQFTGSCTSPLGSQGYGVKGFGFRQGNDVWVGRTISKTSRSGFEILKIKNGWTQNSKDQIQKQVIVDNLNWSGYSGSFTLPVELTKKGCLVPCFWVEMIRGKPEEVTIWTSSSSIVMCGVDNKVANWSWHDGAILPFDIDKM.

Residues 1 to 14 (MNPNQKIITIGSVS) are Intravirion-facing. Residues 11-32 (GSVSLGLVILSIILHVVSIIVT) form an involved in apical transport and lipid raft association region. A helical membrane pass occupies residues 15–35 (LGLVILSIILHVVSIIVTVLV). Residues 32 to 86 (TVLVLSNTGTGLNCNGTIIKEYNETVRVERITQWYNTNIIEYIGRPSNEYYMNNT) form a hypervariable stalk region region. Residues 36–470 (LSNTGTGLNC…AILPFDIDKM (435 aa)) are Virion surface-facing. Residues Asn-46, Asn-54, and Asn-84 are each glycosylated (N-linked (GlcNAc...) asparagine; by host). The head of neuraminidase stretch occupies residues 89-470 (LCEAQGFAPF…AILPFDIDKM (382 aa)). Cystine bridges form between Cys-90/Cys-417, Cys-122/Cys-127, Cys-182/Cys-229, Cys-231/Cys-236, Cys-277/Cys-290, Cys-279/Cys-288, Cys-316/Cys-335, and Cys-421/Cys-446. Residue Arg-116 participates in substrate binding. Asn-144 carries an N-linked (GlcNAc...) asparagine; by host glycan. The active-site Proton donor/acceptor is the Asp-149. Arg-150 contacts substrate. Position 275–276 (275–276 (EE)) interacts with substrate. Arg-291 contributes to the substrate binding site. A Ca(2+)-binding site is contributed by Asp-292. Asn-293 carries an N-linked (GlcNAc...) asparagine; by host glycan. Gly-296 provides a ligand contact to Ca(2+). Asn-307 is a glycosylation site (N-linked (GlcNAc...) asparagine; by host). Asp-322 contacts Ca(2+). Arg-368 provides a ligand contact to substrate. Asn-398 is a glycosylation site (N-linked (GlcNAc...) asparagine; by host). The active-site Nucleophile is the Tyr-402. Asn-454 is a glycosylation site (N-linked (GlcNAc...) asparagine; by host).

Belongs to the glycosyl hydrolase 34 family. Homotetramer. Ca(2+) serves as cofactor. N-glycosylated.

It localises to the virion membrane. The protein localises to the host apical cell membrane. The enzyme catalyses Hydrolysis of alpha-(2-&gt;3)-, alpha-(2-&gt;6)-, alpha-(2-&gt;8)- glycosidic linkages of terminal sialic acid residues in oligosaccharides, glycoproteins, glycolipids, colominic acid and synthetic substrates.. Inhibited by the neuraminidase inhibitors zanamivir (Relenza) and oseltamivir (Tamiflu). These drugs interfere with the release of progeny virus from infected cells and are effective against all influenza strains. Resistance to neuraminidase inhibitors is quite rare. Its function is as follows. Catalyzes the removal of terminal sialic acid residues from viral and cellular glycoconjugates. Cleaves off the terminal sialic acids on the glycosylated HA during virus budding to facilitate virus release. Additionally helps virus spread through the circulation by further removing sialic acids from the cell surface. These cleavages prevent self-aggregation and ensure the efficient spread of the progeny virus from cell to cell. Otherwise, infection would be limited to one round of replication. Described as a receptor-destroying enzyme because it cleaves a terminal sialic acid from the cellular receptors. May facilitate viral invasion of the upper airways by cleaving the sialic acid moieties on the mucin of the airway epithelial cells. Likely to plays a role in the budding process through its association with lipid rafts during intracellular transport. May additionally display a raft-association independent effect on budding. Plays a role in the determination of host range restriction on replication and virulence. Sialidase activity in late endosome/lysosome traffic seems to enhance virus replication. The protein is Neuraminidase of Aves (Horse).